Reading from the N-terminus, the 541-residue chain is uncharacterized protein (541 aa).

The first 17 residues, 1–17, serve as a signal peptide directing secretion; that stretch reads MSFSATILFSPPSGSEA. 2 disordered regions span residues 28–47 and 103–138; these read TSQGSTGSQGGNPPASTPIT and GKVCTADEDRESRARTPPPEEPGVLKGSPGEASNSL. Over residues 103-116 the composition is skewed to basic and acidic residues; it reads GKVCTADEDRESRA. At Thr-118 the chain carries Phosphothreonine. Glycyl lysine isopeptide (Lys-Gly) (interchain with G-Cter in SUMO2) cross-links involve residues Lys-128 and Lys-223. Ser-226 carries the phosphoserine modification. The span at 232 to 243 shows a compositional bias: polar residues; it reads AIQRASSETGPE. Residues 232-254 are disordered; the sequence is AIQRASSETGPESGTKLPATRPE. 2 positions are modified to phosphoserine: Ser-286 and Ser-429. The tract at residues 494 to 526 is disordered; the sequence is YNPNFQEDEGGGNEKGPVSPSYDQPHKTSCPDL.

The protein localises to the secreted. This is an uncharacterized protein from Mus musculus (Mouse).